Consider the following 413-residue polypeptide: Chloramphenicol efflux pump Rv0191 (413 aa).

A run of 12 helical transmembrane segments spans residues 23 to 43 (LSVL…PVGA), 55 to 75 (VVLV…TTVP), 89 to 109 (LVVS…APNF), 110 to 130 (AVLA…WAVI), 150 to 170 (IYIG…AMSL), 176 to 196 (LAAV…RLAL), 226 to 246 (VLTM…VVII), 256 to 276 (NLAW…PLVA), 286 to 306 (AVIV…ALAF), 312 to 332 (AATA…ATAV), 353 to 373 (GLYV…GGLL), and 378 to 398 (LAMM…GMTV).

This sequence belongs to the major facilitator superfamily.

The protein localises to the cell membrane. With respect to regulation, inhibited by the drug efflux pump inhibitors verapamil, resperine, piperine, chlorpromazine and carbonyl cyanide m-chlorophenylhydrazone (CCCP). In terms of biological role, active efflux pump that plays an important role in chloramphenicol resistance. Overexpression causes pyrazinamide resistance. The sequence is that of Chloramphenicol efflux pump Rv0191 from Mycobacterium tuberculosis (strain ATCC 25618 / H37Rv).